The primary structure comprises 106 residues: Iron-sulfur cluster assembly protein CyaY (106 aa).

It belongs to the frataxin family.

Involved in iron-sulfur (Fe-S) cluster assembly. May act as a regulator of Fe-S biogenesis. This chain is Iron-sulfur cluster assembly protein CyaY, found in Yersinia pestis bv. Antiqua (strain Antiqua).